A 250-amino-acid chain; its full sequence is Doublesex- and mab-3-related transcription factor dmd-3 (250 aa).

The segment at residues 19 to 68 is a DNA-binding region (DM 1); that stretch reads CQRCLNHGLREKRKNHKLSCTFRFCQCSNCIMVERRRQLNSRLMQIDGSR. The span at 90 to 100 shows a compositional bias: polar residues; the sequence is CTSQSETTNES. A disordered region spans residues 90–115; it reads CTSQSETTNESSGEDKDDGKPKERRP. Over residues 102–115 the composition is skewed to basic and acidic residues; the sequence is GEDKDDGKPKERRP. The segment at residues 117–164 is a DNA-binding region (DM 2); the sequence is CQRCAQHSVVNRLKGHKRACPFRDCFCAKCQVVVERQKLMADQIKLRR. The interval 166 to 201 is disordered; the sequence is QKREKNNLNSEREAPIAHSMTPSPIDTVTTTTTPTS. The segment covering 169-180 has biased composition (basic and acidic residues); that stretch reads EKNNLNSEREAP. Residues 186-201 show a composition bias toward low complexity; sequence TPSPIDTVTTTTTPTS.

Belongs to the DMRT family. In terms of tissue distribution, in males, expressed in the tail tip. Specifically, expressed in 15 male-specific muscles of the tail tip called the diagonal muscles, and also in core body muscles of both males and hermaphrodites. In males, expressed in ray A-neurons. In males, expressed in PHC sensory neurons. In males, it is also expressed in the hindgut, B lineage and somatic gonad. In hermaphrodites, expressed in the anchor cell only.

It localises to the nucleus. The protein resides in the perikaryon. Transcriptional activator which promotes male-specific development. Acts partially redundantly with the transcription factor mab-3 to coordinate tail tip cell fusion and retraction and thereby regulate male tail tip morphogenesis. This is most likely through the regulation of downstream effectors such as eff-1. May also negatively regulate the expression of other proteins implicated in male tail morphogenesis including nhr-25, vav-1 and arl-1 in tail tip cells. In males, plays a role in the development of ray A-neurons by negatively regulating the activity of the transcription factor ast-1. Plays a role in the male-specific differentiation of PHC sensory neurons into densely connected hub sensory neurons. Plays a role in male mating behavior. In Caenorhabditis elegans, this protein is Doublesex- and mab-3-related transcription factor dmd-3.